We begin with the raw amino-acid sequence, 255 residues long: Hydroxyacylglutathione hydrolase (255 aa).

7 residues coordinate Zn(2+): histidine 56, histidine 58, aspartate 60, histidine 61, histidine 114, aspartate 133, and histidine 171.

It belongs to the metallo-beta-lactamase superfamily. Glyoxalase II family. Monomer. Requires Zn(2+) as cofactor.

The enzyme catalyses an S-(2-hydroxyacyl)glutathione + H2O = a 2-hydroxy carboxylate + glutathione + H(+). Its pathway is secondary metabolite metabolism; methylglyoxal degradation; (R)-lactate from methylglyoxal: step 2/2. In terms of biological role, thiolesterase that catalyzes the hydrolysis of S-D-lactoyl-glutathione to form glutathione and D-lactic acid. The polypeptide is Hydroxyacylglutathione hydrolase (Fuscovulum blasticum (Rhodobacter blasticus)).